We begin with the raw amino-acid sequence, 400 residues long: Subtilisin-like protease 7 (400 aa).

The signal sequence occupies residues 1–20 (MGFITKAIPLALAAASVING). Positions 21 to 119 (AEIMETRAGV…IERDARVQIN (99 aa)) are excised as a propeptide. In terms of domain architecture, Inhibitor I9 spans 36–118 (KYIVVMNDGM…YIERDARVQI (83 aa)). A glycan (N-linked (GlcNAc...) asparagine) is linked at N58. In terms of domain architecture, Peptidase S8 spans 129–400 (SWGLARVGSK…SKLINNGSGM (272 aa)). Residues D161 and H192 each act as charge relay system in the active site. Residues N222 and N252 are each glycosylated (N-linked (GlcNAc...) asparagine). S346 serves as the catalytic Charge relay system. N396 carries N-linked (GlcNAc...) asparagine glycosylation.

It belongs to the peptidase S8 family.

Its subcellular location is the secreted. Its function is as follows. Secreted subtilisin-like serine protease with keratinolytic activity that contributes to pathogenicity. This is Subtilisin-like protease 7 (SUB7) from Arthroderma benhamiae (Trichophyton mentagrophytes).